A 64-amino-acid polypeptide reads, in one-letter code: Small, acid-soluble spore protein beta (64 aa).

This sequence belongs to the alpha/beta-type SASP family.

SASP are bound to spore DNA. They are double-stranded DNA-binding proteins that cause DNA to change to an a-like conformation. They protect the DNA backbone from chemical and enzymatic cleavage and are thus involved in dormant spore's high resistance to UV light. The protein is Small, acid-soluble spore protein beta of Paraclostridium bifermentans (Clostridium bifermentans).